A 1659-amino-acid chain; its full sequence is Daxx-like protein (1659 aa).

Disordered stretches follow at residues 1-25 (MSAS…RRRL) and 265-336 (QLQQ…VRSL). The stretch at 438–469 (LGQLQQEQQKILGQLQQQKQQQQQQQKKILGQ) forms a coiled coil. 3 stretches are compositionally biased toward low complexity: residues 506–520 (SVGQ…QSQQ), 528–542 (KQQP…VGQF), and 600–625 (GQLQ…QQQQ). Disordered regions lie at residues 506–542 (SVGQ…VGQF), 600–645 (GQLQ…TLAG), 658–713 (SAGQ…MPQK), 872–894 (TLPF…HVQG), 924–952 (LPPT…VQQQ), 1023–1060 (VESP…QSRA), and 1536–1555 (FKIA…EDDD). Polar residues predominate over residues 626–635 (KISAGQLQEH). 2 stretches are compositionally biased toward low complexity: residues 636 to 645 (SQQQQKTLAG) and 658 to 698 (SAGQ…QPQQ). Composition is skewed to polar residues over residues 699–711 (RTSA…QQMP) and 885–894 (APMTSTHVQG). Positions 870-1659 (ARTLPFRSSQ…DQIIISDEES (790 aa)) are necessary for interaction with His3.3A and His3.3B. A compositionally biased stretch (low complexity) spans 924–937 (LPPTTSITPQLTPT). The segment covering 1541-1555 (DGDDSEEESDSEDDD) has biased composition (acidic residues).

As to quaternary structure, interacts with p53 (via C-terminus). Interacts (via C-terminus) with His3.3A and His3.3B. Interacts with asf1. Ubiquitously expressed with higher levels in the head (at protein level). Expressed in the germ line, with prominent expression in primary spermatocytes and meiotic spermatocytes (at protein level). In ovaries, expressed in nurse cells and in the germinal vesicle of the ovarian follicle at stage 10 (at protein level).

Its subcellular location is the cytoplasm. It is found in the cytosol. It localises to the nucleus. The protein localises to the chromosome. In terms of biological role, transcription regulator. Acts as a histone chaperone that facilitates deposition of histone H3.3. Has a role in chromatin remodeling together with asf1 and XNP. Has role in the transcriptional apoptotic response to oxidative and UV stress. The polypeptide is Daxx-like protein (Drosophila melanogaster (Fruit fly)).